The sequence spans 206 residues: Small ribosomal subunit protein uS4A (206 aa).

Residues 98 to 164 (MRLDNVVYRL…EKFKTFAENP (67 aa)) enclose the S4 RNA-binding domain.

This sequence belongs to the universal ribosomal protein uS4 family. Part of the 30S ribosomal subunit. Contacts protein S5. The interaction surface between S4 and S5 is involved in control of translational fidelity.

One of the primary rRNA binding proteins, it binds directly to 16S rRNA where it nucleates assembly of the body of the 30S subunit. Its function is as follows. With S5 and S12 plays an important role in translational accuracy. The sequence is that of Small ribosomal subunit protein uS4A from Clostridium botulinum (strain ATCC 19397 / Type A).